Consider the following 305-residue polypeptide: Oxygen-dependent coproporphyrinogen-III oxidase (305 aa).

Serine 99 contributes to the substrate binding site. Residues histidine 103 and histidine 113 each contribute to the a divalent metal cation site. Residue histidine 113 is the Proton donor of the active site. 115–117 is a substrate binding site; it reads NVR. The a divalent metal cation site is built by histidine 152 and histidine 182. An important for dimerization region spans residues 247–282; sequence YVEFNLVLDRGTLFGLQTGGRTESILMSMPPLARWE. Residue 265-267 coordinates substrate; the sequence is GGR.

Belongs to the aerobic coproporphyrinogen-III oxidase family. As to quaternary structure, homodimer. The cofactor is a divalent metal cation.

The protein resides in the cytoplasm. The catalysed reaction is coproporphyrinogen III + O2 + 2 H(+) = protoporphyrinogen IX + 2 CO2 + 2 H2O. The protein operates within porphyrin-containing compound metabolism; protoporphyrin-IX biosynthesis; protoporphyrinogen-IX from coproporphyrinogen-III (O2 route): step 1/1. Functionally, involved in the heme biosynthesis. Catalyzes the aerobic oxidative decarboxylation of propionate groups of rings A and B of coproporphyrinogen-III to yield the vinyl groups in protoporphyrinogen-IX. This is Oxygen-dependent coproporphyrinogen-III oxidase from Vibrio cholerae serotype O1 (strain M66-2).